The primary structure comprises 82 residues: Cytotoxin homolog Clbp-3 (82 aa).

An N-terminal signal peptide occupies residues methionine 1–threonine 21. Disulfide bonds link cysteine 24–cysteine 43, cysteine 36–cysteine 60, cysteine 64–cysteine 75, and cysteine 76–cysteine 81.

This sequence belongs to the three-finger toxin family. Short-chain subfamily. Orphan group XV sub-subfamily. As to expression, expressed by the venom gland.

The protein resides in the secreted. Its subcellular location is the target cell membrane. Its function is as follows. Has low cytotoxic activity. The protein is Cytotoxin homolog Clbp-3 of Naja atra (Chinese cobra).